A 364-amino-acid chain; its full sequence is Probable zinc transporter 10 (364 aa).

The signal sequence occupies residues 1 to 28 (MTKSHVIFSASIALFLLLSISHFPGALS). The Extracellular segment spans residues 29–52 (QSNKDCQSKSNYSCIDKNKALDLK). Residues 53-73 (LLSIFSILITSLIGVCLPFFA) traverse the membrane as a helical segment. Residues 74–85 (RSIPAFQPEKSH) lie on the Cytoplasmic side of the membrane. The helical transmembrane segment at 86–106 (FLIVKSFASGIILSTGFMHVL) threads the bilayer. The Extracellular portion of the chain corresponds to 107–125 (PDSFEMLSSPCLNDNPWHK). A helical membrane pass occupies residues 126-146 (FPFAGFVAMMSAVFTLMVDSI). At 147–209 (TTSVFTKSGR…GSYLQLLRYR (63 aa)) the chain is on the cytoplasmic side. The chain crosses the membrane as a helical span at residues 210–230 (ILAIVLELGIVVQSIVIGLSV). Topologically, residues 231–241 (GDTNNTCTIKG) are extracellular. A helical membrane pass occupies residues 242-262 (LVAALCFHQMFEGMGLGGCIL). Topologically, residues 263 to 271 (QAEYGWVKK) are cytoplasmic. The helical transmembrane segment at 272–292 (AVMAFFFAVTTPFGVVLGMAL) threads the bilayer. Over 293-303 (SKTYKENSPES) the chain is Extracellular. A helical membrane pass occupies residues 304–324 (LITVGLLNASSAGLLIYMALV). Residues 325 to 343 (DLLAADFMGQKMQRSIKLQ) lie on the Cytoplasmic side of the membrane. The helical transmembrane segment at 344–364 (LKSYAAVLLGAGGMSVMAKWA) threads the bilayer.

Belongs to the ZIP transporter (TC 2.A.5) family.

It localises to the cell membrane. Probably mediates zinc uptake from the rhizosphere. This chain is Probable zinc transporter 10 (ZIP10), found in Arabidopsis thaliana (Mouse-ear cress).